The sequence spans 230 residues: MLQKEHASALEKLRVIWLHKKKIEAELQSRHAESTKFLSKIKLKESEIYGLKTKQETCQKELTDCQTLKEEPKEQKKENNKNDENSKKTIEKYEQEIAGLKEKIEGLEEKVKNNYSDENSSLKEELKQCETRIRQLTGGGAIEHYSQNETAHFSRNQKADEPLFFDRGNIQHHIPQKLLLGRELVQTLEEAKVKKLEEREQMDKHPQDRDNKDKEVNEQPDNEEQDYKEH.

Disordered regions lie at residues 63 to 90 and 194 to 230; these read TDCQ…KKTI and KKLE…YKEH. The segment covering 194–217 has biased composition (basic and acidic residues); the sequence is KKLEEREQMDKHPQDRDNKDKEVN.

This is an uncharacterized protein from Caenorhabditis elegans.